An 89-amino-acid polypeptide reads, in one-letter code: Putative antitoxin VapB42 (89 aa).

In terms of biological role, possibly the antitoxin component of a type II toxin-antitoxin (TA) system. Its cognate toxin is VapC42 (Potential). The sequence is that of Putative antitoxin VapB42 (vapB42) from Mycobacterium tuberculosis (strain CDC 1551 / Oshkosh).